The chain runs to 188 residues: Pyridoxal 5'-phosphate synthase subunit PdxT (188 aa).

46 to 48 is an L-glutamine binding site; that stretch reads GES. The active-site Nucleophile is the cysteine 78. L-glutamine is bound by residues arginine 105 and 134–135; that span reads IR. Residues histidine 170 and glutamate 172 each act as charge relay system in the active site.

Belongs to the glutaminase PdxT/SNO family. In the presence of PdxS, forms a dodecamer of heterodimers. Only shows activity in the heterodimer.

The enzyme catalyses aldehydo-D-ribose 5-phosphate + D-glyceraldehyde 3-phosphate + L-glutamine = pyridoxal 5'-phosphate + L-glutamate + phosphate + 3 H2O + H(+). It carries out the reaction L-glutamine + H2O = L-glutamate + NH4(+). Its pathway is cofactor biosynthesis; pyridoxal 5'-phosphate biosynthesis. Its function is as follows. Catalyzes the hydrolysis of glutamine to glutamate and ammonia as part of the biosynthesis of pyridoxal 5'-phosphate. The resulting ammonia molecule is channeled to the active site of PdxS. The sequence is that of Pyridoxal 5'-phosphate synthase subunit PdxT from Desulforamulus reducens (strain ATCC BAA-1160 / DSM 100696 / MI-1) (Desulfotomaculum reducens).